Consider the following 360-residue polypeptide: Peptide chain release factor 1 (360 aa).

At Gln-237 the chain carries N5-methylglutamine.

The protein belongs to the prokaryotic/mitochondrial release factor family. Post-translationally, methylated by PrmC. Methylation increases the termination efficiency of RF1.

Its subcellular location is the cytoplasm. Peptide chain release factor 1 directs the termination of translation in response to the peptide chain termination codons UAG and UAA. The protein is Peptide chain release factor 1 of Pseudomonas syringae pv. syringae (strain B728a).